A 954-amino-acid chain; its full sequence is MKILFNNTFELFCLFVFVTWALFLNNNGILYPVHCLKSAGDTYVDTLRGSNFNNEFIDLLSTRDICNTIKNYITREQIKCAISYDVLNISNIINSLEKTLLRDHNIIINGKEDILKKYLNTFLTLYIKRQSEDVNNFIKKFSNSKLDVVINYRYYEEKFLSEYEEIDSLKKGFSNHISEIKDILNNISSSNNYKKKSGVIYFPDVKETLYSKIQILKEILCKLRNKVSFMYNINFALDEFKENFDKQVYNFKGKEGLNDFVRITSDITNPTSTFTNVVDINKFNVNTQMDEIQNGTLSKEHLNDFRRNIINLDVHIRDPSSFCVNQVENPTEMNINNPCNNNDGNNINCKDLVEEDAMLNHFSFLLHHLEKMTCILIFSLKNKISSARDDIQKDINKMESELINVSNEINRLDIVVDVPQHHILNYHNKNENKVFNLMNIKNEYYEYLGGHNKINNNFDDFDNTLMLLERKTNWIKDQNIMTYGDREDIHEAISSTLEMIDKLKDMYVTENFNLLITYENLYKEINLFLYNKQYNISEEAYIYAWNSLENFKGKKLLTEGIDRLLGSVMSISYVIKYVKVANKHLNPQICFNLNKLSNAFMNIEEKLVLYRNQFYRLNHDITTLKLFKNNIEKLGYAYRDNMNKVHINMDTYNIATENLQHEIDNILENISDVLYEDMLINELKTMRATWKNFVYVKYDYFKQNNKLIEEFDENKLIIFPPQFGLMKQSEQTNIRNDNNNNNNNNNNNSNNNNNNNNNNKDNSVASLGSSILTRTSSPDNYLIGQNFIKSPYYNLLYEFATEKINCAKTPEERIKSFGEIYRTIDRVSSVIKENRKNLRSKYDNMRIEILKLIDYRKHTFEETKDVHKELIRLEGFILNTLDNLFAKRMTLSVQMKNSVEMLKGSLYKDKLPDYCKAVEMFIPKYFLTMTRWRNFLLEYRKIMPSRVISKFYST.

The signal sequence occupies residues M1–C35. Positions K381–V415 form a coiled coil. The interval N733–A765 is disordered. Residues N736 to S763 show a composition bias toward low complexity.

This is an uncharacterized protein from Plasmodium falciparum (isolate 3D7).